The primary structure comprises 206 residues: Protein GrpE (206 aa).

Residues 1-64 (MSKKASMHKE…KALEEAQQQA (64 aa)) form a disordered region. The segment covering 46 to 58 (SDAKVQELEKALE) has biased composition (basic and acidic residues).

It belongs to the GrpE family. Homodimer.

Its subcellular location is the cytoplasm. Functionally, participates actively in the response to hyperosmotic and heat shock by preventing the aggregation of stress-denatured proteins, in association with DnaK and GrpE. It is the nucleotide exchange factor for DnaK and may function as a thermosensor. Unfolded proteins bind initially to DnaJ; upon interaction with the DnaJ-bound protein, DnaK hydrolyzes its bound ATP, resulting in the formation of a stable complex. GrpE releases ADP from DnaK; ATP binding to DnaK triggers the release of the substrate protein, thus completing the reaction cycle. Several rounds of ATP-dependent interactions between DnaJ, DnaK and GrpE are required for fully efficient folding. In Prosthecochloris aestuarii (strain DSM 271 / SK 413), this protein is Protein GrpE.